Here is a 61-residue protein sequence, read N- to C-terminus: Sperm protamine P1 (61 aa).

The segment at 1-61 is disordered; the sequence is MARYRHSRSR…RRYSRRRRRY (61 aa).

Belongs to the protamine P1 family. Testis.

It is found in the nucleus. It localises to the chromosome. Protamines substitute for histones in the chromatin of sperm during the haploid phase of spermatogenesis. They compact sperm DNA into a highly condensed, stable and inactive complex. The chain is Sperm protamine P1 (PRM1) from Macropus giganteus (Eastern gray kangaroo).